A 160-amino-acid chain; its full sequence is Transcriptional regulator MraZ (160 aa).

SpoVT-AbrB domains follow at residues 5–51 and 80–123; these read TFEK…GKAL and MAKL…EREA.

The protein belongs to the MraZ family. As to quaternary structure, forms oligomers.

It is found in the cytoplasm. The protein resides in the nucleoid. The sequence is that of Transcriptional regulator MraZ from Phenylobacterium zucineum (strain HLK1).